The chain runs to 257 residues: MSLIDIQNLTIKNTSEKSLIKGIDLKIYNQQINALIGESGAGKSLIAKALLEYLPFDLTCTYDSYQFDGENVSRLSQYYGHTIGYIYQNYAESFNDHTKLGKQLTAIYRKHYKSCKEEALSKIDKALSWVNLQSKDILNKYSFQLSGGQLERVYIASVLMLKPKLIIADEPVASLDALNGNQVMDLLQHIVLEHGQTLFIITHNLSHVLKYCQYIYVLKEGQIIERGNINHFKYEHLHPYTERLIKYRTQLKRDYYD.

The ABC transporter domain maps to 4-245 (IDIQNLTIKN…HLHPYTERLI (242 aa)). 37 to 44 (GESGAGKS) serves as a coordination point for ATP.

The protein belongs to the ABC transporter superfamily. The complex is composed of two ATP-binding proteins (NikD and NikE), two transmembrane proteins (NikB and NikC) and a solute-binding protein (NikA).

Its subcellular location is the cell membrane. The catalysed reaction is Ni(2+)(out) + ATP + H2O = Ni(2+)(in) + ADP + phosphate + H(+). Part of the ABC transporter complex NikABCDE (Opp2) involved in nickel import. Probably responsible for energy coupling to the transport system. This is Nickel import system ATP-binding protein NikD from Staphylococcus aureus (strain MRSA252).